The chain runs to 29 residues: uncharacterized protein (29 aa).

The interval M1–G29 is disordered.

This is an uncharacterized protein from Saccharomyces cerevisiae (strain ATCC 204508 / S288c) (Baker's yeast).